We begin with the raw amino-acid sequence, 396 residues long: S-adenosylmethionine synthase 1 (396 aa).

Glutamate 13 is a Mg(2+) binding site. Histidine 19 contributes to the ATP binding site. Glutamate 47 contributes to the K(+) binding site. 2 residues coordinate L-methionine: glutamate 60 and glutamine 103. ATP contacts are provided by residues 171–173 (DGK), 239–242 (SGRF), aspartate 250, 256–257 (RK), alanine 273, lysine 277, and lysine 281. Aspartate 250 is a binding site for L-methionine. An L-methionine-binding site is contributed by lysine 281.

This sequence belongs to the AdoMet synthase family. In terms of assembly, homotetramer. It depends on Mn(2+) as a cofactor. The cofactor is Mg(2+). Co(2+) serves as cofactor. K(+) is required as a cofactor.

It is found in the cytoplasm. It catalyses the reaction L-methionine + ATP + H2O = S-adenosyl-L-methionine + phosphate + diphosphate. The protein operates within amino-acid biosynthesis; S-adenosyl-L-methionine biosynthesis; S-adenosyl-L-methionine from L-methionine: step 1/1. Its function is as follows. Catalyzes the formation of S-adenosylmethionine from methionine and ATP. The reaction comprises two steps that are both catalyzed by the same enzyme: formation of S-adenosylmethionine (AdoMet) and triphosphate, and subsequent hydrolysis of the triphosphate. May be involved in the synthesis of betain in response to abiotic stress such as high salinity. The chain is S-adenosylmethionine synthase 1 (SAMS1) from Beta vulgaris (Sugar beet).